The sequence spans 106 residues: Large ribosomal subunit protein P1 (106 aa).

The span at 66 to 76 shows a compositional bias: low complexity; it reads AQPQATQAQPA. Residues 66 to 106 are disordered; it reads AQPQATQAQPAAEEKKEEKKEEEKKGPSEEEIASGLASLFG. The span at 77-93 shows a compositional bias: basic and acidic residues; that stretch reads AEEKKEEKKEEEKKGPS.

The protein belongs to the eukaryotic ribosomal protein P1/P2 family. As to quaternary structure, part of the 50S ribosomal subunit. Homodimer, it forms part of the ribosomal stalk which helps the ribosome interact with GTP-bound translation factors. Forms a heptameric uL10/P0(P1)2(P1)2(P1)2 complex, where uL10/P0 forms an elongated spine to which the P1 dimers bind in a sequential fashion.

In terms of biological role, forms part of the ribosomal stalk, playing a central role in the interaction of the ribosome with GTP-bound translation factors. The sequence is that of Large ribosomal subunit protein P1 from Saccharolobus solfataricus (strain ATCC 35092 / DSM 1617 / JCM 11322 / P2) (Sulfolobus solfataricus).